We begin with the raw amino-acid sequence, 520 residues long: GMP synthase [glutamine-hydrolyzing] (520 aa).

The Glutamine amidotransferase type-1 domain occupies 9-202 (TVLIVDFGSQ…VHNIAGIEGD (194 aa)). Catalysis depends on Cys-86, which acts as the Nucleophile. Active-site residues include His-176 and Glu-178. The region spanning 203-395 (WTMRAYREHA…LGLPESFIGR (193 aa)) is the GMPS ATP-PPase domain. 230 to 236 (SGGVDSS) lines the ATP pocket.

Homodimer.

The catalysed reaction is XMP + L-glutamine + ATP + H2O = GMP + L-glutamate + AMP + diphosphate + 2 H(+). Its pathway is purine metabolism; GMP biosynthesis; GMP from XMP (L-Gln route): step 1/1. In terms of biological role, catalyzes the synthesis of GMP from XMP. This is GMP synthase [glutamine-hydrolyzing] from Mesorhizobium japonicum (strain LMG 29417 / CECT 9101 / MAFF 303099) (Mesorhizobium loti (strain MAFF 303099)).